A 197-amino-acid polypeptide reads, in one-letter code: Putative peptidyl-prolyl cis-trans isomerase (197 aa).

The region spanning 14–195 (GEIKVVMHTN…HDVVIESIDV (182 aa)) is the PPIase cyclophilin-type domain.

It belongs to the cyclophilin-type PPIase family.

The catalysed reaction is [protein]-peptidylproline (omega=180) = [protein]-peptidylproline (omega=0). Its function is as follows. PPIases accelerate the folding of proteins. It catalyzes the cis-trans isomerization of proline imidic peptide bonds in oligopeptides. This chain is Putative peptidyl-prolyl cis-trans isomerase, found in Staphylococcus aureus (strain COL).